Consider the following 490-residue polypeptide: Cytochrome P450 2C8 (490 aa).

Substrate is bound by residues serine 100, asparagine 204, and arginine 241. Phosphoserine is present on serine 100. Position 435 (cysteine 435) interacts with heme.

The protein belongs to the cytochrome P450 family. It depends on heme as a cofactor.

The protein resides in the endoplasmic reticulum membrane. It localises to the microsome membrane. The catalysed reaction is an organic molecule + reduced [NADPH--hemoprotein reductase] + O2 = an alcohol + oxidized [NADPH--hemoprotein reductase] + H2O + H(+). The enzyme catalyses (5Z,8Z,11Z,14Z)-eicosatetraenoate + reduced [NADPH--hemoprotein reductase] + O2 = (11R,12S)-epoxy-(5Z,8Z,14Z)-eicosatrienoate + oxidized [NADPH--hemoprotein reductase] + H2O + H(+). It catalyses the reaction (5Z,8Z,11Z,14Z)-eicosatetraenoate + reduced [NADPH--hemoprotein reductase] + O2 = (11S,12R)-epoxy-(5Z,8Z,14Z)-eicosatrienoate + oxidized [NADPH--hemoprotein reductase] + H2O + H(+). It carries out the reaction (5Z,8Z,11Z,14Z)-eicosatetraenoate + reduced [NADPH--hemoprotein reductase] + O2 = (14R,15S)-epoxy-(5Z,8Z,11Z)-eicosatrienoate + oxidized [NADPH--hemoprotein reductase] + H2O + H(+). The catalysed reaction is (5Z,8Z,11Z,14Z)-eicosatetraenoate + reduced [NADPH--hemoprotein reductase] + O2 = (14S,15R)-epoxy-(5Z,8Z,11Z)-eicosatrienoate + oxidized [NADPH--hemoprotein reductase] + H2O + H(+). The enzyme catalyses (5Z,8Z,11Z,14Z,17Z)-eicosapentaenoate + reduced [NADPH--hemoprotein reductase] + O2 = 11,12-epoxy-(5Z,8Z,14Z,17Z)-eicosatetraenoate + oxidized [NADPH--hemoprotein reductase] + H2O + H(+). It catalyses the reaction (5Z,8Z,11Z,14Z,17Z)-eicosapentaenoate + reduced [NADPH--hemoprotein reductase] + O2 = 14,15-epoxy-(5Z,8Z,11Z,17Z)-eicosatetraenoate + oxidized [NADPH--hemoprotein reductase] + H2O + H(+). It carries out the reaction (5Z,8Z,11Z,14Z,17Z)-eicosapentaenoate + reduced [NADPH--hemoprotein reductase] + O2 = (17R,18S)-epoxy-(5Z,8Z,11Z,14Z)-eicosatetraenoate + oxidized [NADPH--hemoprotein reductase] + H2O + H(+). The catalysed reaction is (5Z,8Z,11Z,14Z,17Z)-eicosapentaenoate + reduced [NADPH--hemoprotein reductase] + O2 = (17S,18R)-epoxy-(5Z,8Z,11Z,14Z)-eicosatetraenoate + oxidized [NADPH--hemoprotein reductase] + H2O + H(+). The enzyme catalyses (4Z,7Z,10Z,13Z,16Z,19Z)-docosahexaenoate + reduced [NADPH--hemoprotein reductase] + O2 = (19R,20S)-epoxy-(4Z,7Z,10Z,13Z,16Z)-docosapentaenoate + oxidized [NADPH--hemoprotein reductase] + H2O + H(+). It catalyses the reaction (4Z,7Z,10Z,13Z,16Z,19Z)-docosahexaenoate + reduced [NADPH--hemoprotein reductase] + O2 = (19S,20R)-epoxy-(4Z,7Z,10Z,13Z,16Z)-docosapentaenoate + oxidized [NADPH--hemoprotein reductase] + H2O + H(+). It carries out the reaction all-trans-retinoate + reduced [NADPH--hemoprotein reductase] + O2 = all-trans-4-hydroxyretinoate + oxidized [NADPH--hemoprotein reductase] + H2O + H(+). The catalysed reaction is 17beta-estradiol + reduced [NADPH--hemoprotein reductase] + O2 = 16alpha,17beta-estriol + oxidized [NADPH--hemoprotein reductase] + H2O + H(+). The enzyme catalyses estrone + reduced [NADPH--hemoprotein reductase] + O2 = 16alpha-hydroxyestrone + oxidized [NADPH--hemoprotein reductase] + H2O + H(+). It functions in the pathway steroid metabolism. It participates in lipid metabolism; arachidonate metabolism. Its pathway is cofactor metabolism; retinol metabolism. A cytochrome P450 monooxygenase involved in the metabolism of various endogenous substrates, including fatty acids, steroid hormones and vitamins. Mechanistically, uses molecular oxygen inserting one oxygen atom into a substrate, and reducing the second into a water molecule, with two electrons provided by NADPH via cytochrome P450 reductase (NADPH--hemoprotein reductase). Primarily catalyzes the epoxidation of double bonds of polyunsaturated fatty acids (PUFA) with a preference for the last double bond. Catalyzes the hydroxylation of carbon-hydrogen bonds. Metabolizes all trans-retinoic acid toward its 4-hydroxylated form. Displays 16-alpha hydroxylase activity toward estrogen steroid hormones, 17beta-estradiol (E2) and estrone (E1). Plays a role in the oxidative metabolism of xenobiotics. It is the principal enzyme responsible for the metabolism of the anti-cancer drug paclitaxel (taxol). The sequence is that of Cytochrome P450 2C8 from Homo sapiens (Human).